The sequence spans 41 residues: Large ribosomal subunit protein bL36 (41 aa).

The protein belongs to the bacterial ribosomal protein bL36 family.

The chain is Large ribosomal subunit protein bL36 from Nitrobacter winogradskyi (strain ATCC 25391 / DSM 10237 / CIP 104748 / NCIMB 11846 / Nb-255).